The sequence spans 346 residues: Peripherin-2 (346 aa).

Topologically, residues 1–24 are cytoplasmic; that stretch reads MALLKVKFDQKKRVKLAQGLWLMN. Residues 25-43 traverse the membrane as a helical segment; it reads WLSVLAGIVIFSLGLFLKI. Over 44-61 the chain is Lumenal; the sequence is ELRKRSDVMNNSESHFVP. N-linked (GlcNAc...) asparagine glycosylation is present at Asn-53. The helical transmembrane segment at 62–80 threads the bilayer; sequence NSLIGMGVLSCVFNSLAGK. Topologically, residues 81–99 are cytoplasmic; that stretch reads ICYDALDPSKYAKWKPWLK. The chain crosses the membrane as a helical span at residues 100–123; the sequence is SYLVVCVLFNIVLFLVALCCFLMR. Over 124–264 the chain is Lumenal; sequence GSLESTLAQG…LSYYGSLMNS (141 aa). A glycan (N-linked (GlcNAc...) asparagine) is linked at Asn-229. Residues 265 to 290 form a helical membrane-spanning segment; that stretch reads MGAVTLLVWLFEVSITIGLRYLHTAL. At 291-346 the chain is on the cytoplasmic side; it reads EGVSNPEDLECESEGWLLEKSVSETWKAFLESLKKLGKSNQVEAEGADAGQAPEAG. The tract at residues 341–346 is interaction with MREG; it reads QAPEAG.

Belongs to the PRPH2/ROM1 family. As to quaternary structure, homodimer; disulfide-linked. Forms a homotetramer. Forms a heterotetramer with ROM1. Homotetramer and heterotetramer core complexes go on to form higher order complexes by formation of intermolecular disulfide bonds. Interacts with MREG. Interacts with STX3. Interacts with SNAP25. In terms of tissue distribution, retina (photoreceptor). In rim region of ROS (rod outer segment) disks.

The protein localises to the membrane. Its subcellular location is the cell projection. It localises to the cilium. It is found in the photoreceptor outer segment. The protein resides in the photoreceptor inner segment. Functionally, essential for retina photoreceptor outer segment disk morphogenesis, may also play a role with ROM1 in the maintenance of outer segment disk structure. Required for the maintenance of retinal outer nuclear layer thickness. Required for the correct development and organization of the photoreceptor inner segment. This is Peripherin-2 (PRPH2) from Felis catus (Cat).